The following is a 246-amino-acid chain: Ribonuclease 3 (246 aa).

The RNase III domain maps to 18-147 (FQELQNKIGI…FIGALYLDQG (130 aa)). E60 is a Mg(2+) binding site. Residue D64 is part of the active site. Mg(2+)-binding residues include D133 and E136. E136 is an active-site residue. The DRBM domain occupies 173–242 (DFKSQLQELV…AQMALETLRA (70 aa)).

Belongs to the ribonuclease III family. As to quaternary structure, homodimer. Mg(2+) is required as a cofactor.

Its subcellular location is the cytoplasm. The enzyme catalyses Endonucleolytic cleavage to 5'-phosphomonoester.. Its function is as follows. Digests double-stranded RNA. Involved in the processing of primary rRNA transcript to yield the immediate precursors to the large and small rRNAs (23S and 16S). Processes some mRNAs, and tRNAs when they are encoded in the rRNA operon. Processes pre-crRNA and tracrRNA of type II CRISPR loci if present in the organism. The chain is Ribonuclease 3 from Geobacillus kaustophilus (strain HTA426).